Reading from the N-terminus, the 382-residue chain is Alpha-methylacyl-CoA racemase (382 aa).

Residues Arg-36 and 55-58 contribute to the substrate site; that span reads LDLK. Lys-58 carries the post-translational modification N6-acetyllysine. Lys-87 is modified (N6-acetyllysine; alternate). Position 87 is an N6-succinyllysine; alternate (Lys-87). Position 121–126 (121–126) interacts with substrate; the sequence is GHDINY. His-122 (proton acceptor) is an active-site residue. Asp-152 acts as the Proton donor in catalysis. Lys-268 is subject to N6-succinyllysine. A Microbody targeting signal motif is present at residues 380–382; it reads ASL.

It belongs to the CoA-transferase III family. As to quaternary structure, monomer.

The protein resides in the peroxisome. Its subcellular location is the mitochondrion. It catalyses the reaction a (2S)-2-methylacyl-CoA = a (2R)-2-methylacyl-CoA. The catalysed reaction is (25R)-3alpha,7alpha,12alpha-trihydroxy-5beta-cholestan-26-oyl-CoA = (25S)-3alpha,7alpha,12alpha-trihydroxy-5beta-cholestan-26-oyl-CoA. The enzyme catalyses (2R,6)-dimethylheptanoyl-CoA = (2S,6)-dimethylheptanoyl-CoA. Its pathway is lipid metabolism; bile acid biosynthesis. It participates in lipid metabolism; fatty acid metabolism. In terms of biological role, catalyzes the interconversion of (R)- and (S)-stereoisomers of alpha-methyl-branched-chain fatty acyl-CoA esters. Acts only on coenzyme A thioesters, not on free fatty acids, and accepts as substrates a wide range of alpha-methylacyl-CoAs, including pristanoyl-CoA, trihydroxycoprostanoyl-CoA (an intermediate in bile acid synthesis), and arylpropionic acids like the anti-inflammatory drug ibuprofen (2-(4-isobutylphenyl)propionic acid) but neither 3-methyl-branched nor linear-chain acyl-CoAs. This chain is Alpha-methylacyl-CoA racemase (AMACR), found in Homo sapiens (Human).